The chain runs to 734 residues: Paralemmin-3 (734 aa).

Residues 19-64 (SALYRQRLEVIAEKRRLQEEIGAARRELEEEKLRVERLKRKSLRER) adopt a coiled-coil conformation. 2 disordered regions span residues 62–100 (RERW…RNLE) and 114–217 (QSAS…LGVS). The span at 73–82 (GPERPEEPAS) shows a compositional bias: basic and acidic residues. The stretch at 90 to 116 (GQAQARIRNLEDSLFSLQSQLQLLQSA) forms a coiled coil. Phosphoserine is present on residues serine 139, serine 158, serine 167, serine 170, and serine 172. The segment covering 186-198 (RPSTEAIGTSSEA) has biased composition (polar residues). Serine 270 carries the phosphoserine modification. The segment covering 297-308 (DVTGESGRDAEA) has biased composition (basic and acidic residues). Disordered regions lie at residues 297 to 347 (DVTG…PGVE), 374 to 400 (PQGA…SWEV), and 413 to 709 (EKGR…YAPA). At threonine 311 the chain carries Phosphothreonine. Residues 315–336 (RLQEQFEAETCRKEEGASRDSL) show a composition bias toward basic and acidic residues. Residues serine 332 and serine 335 each carry the phosphoserine modification. Basic and acidic residues-rich tracts occupy residues 413-427 (EKGR…REDG), 435-452 (TQGR…KDSE), 462-484 (DEEK…KGGE), 494-531 (LVTE…ESKT), 540-561 (IGDK…EKTG), 571-582 (EGSKKLLDREAD), 589-607 (EVDK…EQGK), and 630-647 (DEPR…KQEG). Serine 451 bears the Phosphoserine mark. Residue serine 601 is modified to Phosphoserine. Serine 721 is modified (phosphoserine). S-palmitoyl cysteine attachment occurs at residues cysteine 728 and cysteine 730. Cysteine 731 is modified (cysteine methyl ester). Cysteine 731 carries the S-farnesyl cysteine lipid modification. A propeptide spans 732–734 (VVM) (removed in mature form).

This sequence belongs to the paralemmin family. Interacts with SIGIRR. Palmitoylated on Cys-728 and Cys-730 and prenylated on Cys-731; which is required for membrane association.

The protein localises to the cytoplasm. Its subcellular location is the cell membrane. ATP-binding protein, which may act as a adapter in the Toll-like receptor (TLR) signaling. The sequence is that of Paralemmin-3 (Palm3) from Mus musculus (Mouse).